Consider the following 109-residue polypeptide: Spermidine export protein MdtI (109 aa).

4 helical membrane-spanning segments follow: residues 6–26, 36–56, 64–84, and 88–108; these read WVHA…NVFL, FYGI…SQAV, AYAL…WVLF, and LNNK…MIKL.

The protein belongs to the drug/metabolite transporter (DMT) superfamily. Small multidrug resistance (SMR) (TC 2.A.7.1) family. MdtI subfamily. Forms a complex with MdtJ.

The protein resides in the cell inner membrane. Its function is as follows. Catalyzes the excretion of spermidine. This Citrobacter koseri (strain ATCC BAA-895 / CDC 4225-83 / SGSC4696) protein is Spermidine export protein MdtI.